Reading from the N-terminus, the 107-residue chain is Putative double-stranded DNA mimic protein NTHI1680 (107 aa).

This sequence belongs to the putative dsDNA mimic protein family.

In terms of biological role, may act as a double-stranded DNA (dsDNA) mimic. Probably regulates the activity of a dsDNA-binding protein. In Haemophilus influenzae (strain 86-028NP), this protein is Putative double-stranded DNA mimic protein NTHI1680.